Here is a 246-residue protein sequence, read N- to C-terminus: N-alpha-acetyltransferase 11 (246 aa).

The segment at 1–58 (MNIRNARPEDLMNMQHCNLLCLPENYQMKYYFYHGLSWPQLSYIAEDEDGKIVGYVLA) is interaction with NAA15. In terms of domain architecture, N-acetyltransferase spans 1-152 (MNIRNARPED…DAYAMKRDLA (152 aa)). A disordered region spans residues 175 to 246 (EENQEAQDST…DSSEYLDSTS (72 aa)). A compositionally biased stretch (polar residues) spans 230–246 (SHSTDVQDSSEYLDSTS).

The protein belongs to the acetyltransferase family. ARD1 subfamily. Component of the N-terminal acetyltransferase A (NatA) complex composed of NAA11 and NAA15. Interacts with HIF1A.

The protein localises to the cytoplasm. It localises to the nucleus. It catalyses the reaction N-terminal glycyl-[protein] + acetyl-CoA = N-terminal N(alpha)-acetylglycyl-[protein] + CoA + H(+). The enzyme catalyses N-terminal L-alanyl-[protein] + acetyl-CoA = N-terminal N(alpha)-acetyl-L-alanyl-[protein] + CoA + H(+). It carries out the reaction N-terminal L-seryl-[protein] + acetyl-CoA = N-terminal N(alpha)-acetyl-L-seryl-[protein] + CoA + H(+). The catalysed reaction is N-terminal L-valyl-[protein] + acetyl-CoA = N-terminal N(alpha)-acetyl-L-valyl-[protein] + CoA + H(+). It catalyses the reaction N-terminal L-cysteinyl-[protein] + acetyl-CoA = N-terminal N(alpha)-acetyl-L-cysteinyl-[protein] + CoA + H(+). The enzyme catalyses N-terminal L-threonyl-[protein] + acetyl-CoA = N-terminal N(alpha)-acetyl-L-threonyl-[protein] + CoA + H(+). Its function is as follows. Displays alpha (N-terminal) acetyltransferase activity. Proposed alternative catalytic subunit of the N-terminal acetyltransferase A (NatA) complex. This Rattus norvegicus (Rat) protein is N-alpha-acetyltransferase 11 (Naa11).